The primary structure comprises 234 residues: MSDDDRRRWKGPGPERQDSGRRSTERKVIARNARTESSKRWIERQLQDPYVRKAKDEGYRSRAAYKLLEIDAAAKILRKGMRVVDLGCAPGGWIQVSLQQGAAEVVGIDLLPLDPIEGATIIEGDVNNPDDVARMMAGLSGTPDLILSDMAANTTGHKQTDHLRTVALVEMAVAFAIEHLDDGGAFCAKVFQGGATKDVLNLLKQHFRTVKHIKPAASRAGSPEIYVVAKGFRR.

The interval Met-1–Ser-37 is disordered. Residues Gly-91, Trp-93, Asp-109, Asp-125, and Asp-149 each contribute to the S-adenosyl-L-methionine site. Lys-189 serves as the catalytic Proton acceptor.

Belongs to the class I-like SAM-binding methyltransferase superfamily. RNA methyltransferase RlmE family.

It localises to the cytoplasm. The enzyme catalyses uridine(2552) in 23S rRNA + S-adenosyl-L-methionine = 2'-O-methyluridine(2552) in 23S rRNA + S-adenosyl-L-homocysteine + H(+). Its function is as follows. Specifically methylates the uridine in position 2552 of 23S rRNA at the 2'-O position of the ribose in the fully assembled 50S ribosomal subunit. The polypeptide is Ribosomal RNA large subunit methyltransferase E (Hyphomonas neptunium (strain ATCC 15444)).